A 641-amino-acid chain; its full sequence is ATP-dependent zinc metalloprotease FtsH 2 (641 aa).

The Periplasmic segment spans residues 1-100 (MLAYYVSVNQ…IDVKVIHNFW (100 aa)). A helical transmembrane segment spans residues 101 to 121 (GQAFLSVLPFLLFILALYFLF). Over 122-641 (RQQIRMAGRG…LLPGLEGAPA (520 aa)) the chain is Cytoplasmic. 193 to 200 (GPPGTGKT) is a binding site for ATP. H415 contacts Zn(2+). Residue E416 is part of the active site. Residues H419 and D491 each coordinate Zn(2+). A disordered region spans residues 593–641 (KTGKMTNPPSKNSSPVSNGGEASSTKSPARQEETTKDGGLLPGLEGAPA). Low complexity-rich tracts occupy residues 599–610 (NPPSKNSSPVSN) and 630–641 (GGLLPGLEGAPA).

This sequence in the central section; belongs to the AAA ATPase family. In the C-terminal section; belongs to the peptidase M41 family. Homohexamer. Zn(2+) is required as a cofactor.

The protein resides in the cell inner membrane. Functionally, acts as a processive, ATP-dependent zinc metallopeptidase for both cytoplasmic and membrane proteins. Plays a role in the quality control of integral membrane proteins. This Methylacidiphilum infernorum (isolate V4) (Methylokorus infernorum (strain V4)) protein is ATP-dependent zinc metalloprotease FtsH 2.